Here is a 1877-residue protein sequence, read N- to C-terminus: Protein TIC 214 (1877 aa).

Transmembrane regions (helical) follow at residues isoleucine 18 to glycine 38, phenylalanine 67 to leucine 87, proline 90 to histidine 110, leucine 127 to leucine 147, valine 175 to isoleucine 195, and isoleucine 224 to isoleucine 244. Residues phenylalanine 249 to arginine 258 are compositionally biased toward basic and acidic residues. The tract at residues phenylalanine 249–glutamate 308 is disordered. 2 stretches are compositionally biased toward acidic residues: residues glycine 259–threonine 271 and glycine 284–glutamate 298. Residues aspartate 299 to glutamate 308 are compositionally biased toward basic and acidic residues.

It belongs to the TIC214 family. In terms of assembly, part of the Tic complex.

The protein localises to the plastid. Its subcellular location is the chloroplast inner membrane. In terms of biological role, involved in protein precursor import into chloroplasts. May be part of an intermediate translocation complex acting as a protein-conducting channel at the inner envelope. In Eucalyptus globulus subsp. globulus (Tasmanian blue gum), this protein is Protein TIC 214.